The sequence spans 312 residues: tRNA dimethylallyltransferase (312 aa).

15-22 contributes to the ATP binding site; the sequence is GPTAAGKS. 17–22 serves as a coordination point for substrate; sequence TAAGKS. Positions 40 to 43 are interaction with substrate tRNA; the sequence is DSMQ.

Belongs to the IPP transferase family. As to quaternary structure, monomer. It depends on Mg(2+) as a cofactor.

The enzyme catalyses adenosine(37) in tRNA + dimethylallyl diphosphate = N(6)-dimethylallyladenosine(37) in tRNA + diphosphate. Its function is as follows. Catalyzes the transfer of a dimethylallyl group onto the adenine at position 37 in tRNAs that read codons beginning with uridine, leading to the formation of N6-(dimethylallyl)adenosine (i(6)A). The chain is tRNA dimethylallyltransferase from Streptomyces coelicolor (strain ATCC BAA-471 / A3(2) / M145).